The sequence spans 152 residues: 3-hydroxyacyl-[acyl-carrier-protein] dehydratase FabZ (152 aa).

Residue histidine 58 is part of the active site.

The protein belongs to the thioester dehydratase family. FabZ subfamily.

It is found in the cytoplasm. The catalysed reaction is a (3R)-hydroxyacyl-[ACP] = a (2E)-enoyl-[ACP] + H2O. In terms of biological role, involved in unsaturated fatty acids biosynthesis. Catalyzes the dehydration of short chain beta-hydroxyacyl-ACPs and long chain saturated and unsaturated beta-hydroxyacyl-ACPs. This Prochlorococcus marinus (strain MIT 9515) protein is 3-hydroxyacyl-[acyl-carrier-protein] dehydratase FabZ.